A 478-amino-acid polypeptide reads, in one-letter code: Glycogen synthase (478 aa).

K20 is an ADP-alpha-D-glucose binding site.

This sequence belongs to the glycosyltransferase 1 family. Bacterial/plant glycogen synthase subfamily.

The catalysed reaction is [(1-&gt;4)-alpha-D-glucosyl](n) + ADP-alpha-D-glucose = [(1-&gt;4)-alpha-D-glucosyl](n+1) + ADP + H(+). The protein operates within glycan biosynthesis; glycogen biosynthesis. Functionally, synthesizes alpha-1,4-glucan chains using ADP-glucose. The polypeptide is Glycogen synthase (Cereibacter sphaeroides (strain ATCC 17025 / ATH 2.4.3) (Rhodobacter sphaeroides)).